A 1335-amino-acid polypeptide reads, in one-letter code: Aldehyde oxidase 2 (1335 aa).

In terms of domain architecture, 2Fe-2S ferredoxin-type spans Asp-8 to Val-95. The [2Fe-2S] cluster site is built by Cys-47, Cys-52, Cys-55, and Cys-77. Gln-116 provides a ligand contact to Mo-molybdopterin. Residues Cys-117, Cys-120, Cys-152, and Cys-154 each coordinate [2Fe-2S] cluster. Cys-154 contributes to the Mo-molybdopterin binding site. The FAD-binding PCMH-type domain maps to Phe-242–Lys-427. FAD is bound by residues Leu-270–Leu-277, Ala-351, Ser-360, His-364, Asp-373, and Leu-417. Residues Gly-821–Phe-822, Ala-1103–Gly-1106, Gln-1218, and Leu-1285 contribute to the Mo-molybdopterin site. Catalysis depends on Glu-1287, which acts as the Proton acceptor; for azaheterocycle hydroxylase activity.

Belongs to the xanthine dehydrogenase family. Homodimer. [2Fe-2S] cluster is required as a cofactor. It depends on FAD as a cofactor. Requires Mo-molybdopterin as cofactor. In terms of tissue distribution, detected in kidney, Harderian gland and olfactory mucosa.

Its subcellular location is the cytoplasm. It catalyses the reaction an aldehyde + O2 + H2O = a carboxylate + H2O2 + H(+). Oxidase with broad substrate specificity, oxidizing aromatic azaheterocycles, such as phthalazine, as well as aldehydes, such as benzaldehyde and retinal. The sequence is that of Aldehyde oxidase 2 (AOX2) from Cavia porcellus (Guinea pig).